We begin with the raw amino-acid sequence, 236 residues long: uncharacterized protein (236 aa).

This is an uncharacterized protein from Ureaplasma parvum serovar 3 (strain ATCC 700970).